We begin with the raw amino-acid sequence, 21 residues long: Putative sperm adenylate cyclase (21 aa).

The enzyme catalyses ATP = 3',5'-cyclic AMP + diphosphate. The sequence is that of Putative sperm adenylate cyclase from Mus musculus (Mouse).